The sequence spans 194 residues: ATP-dependent Clp protease proteolytic subunit (194 aa).

Ser98 functions as the Nucleophile in the catalytic mechanism. His123 is an active-site residue.

It belongs to the peptidase S14 family. As to quaternary structure, fourteen ClpP subunits assemble into 2 heptameric rings which stack back to back to give a disk-like structure with a central cavity, resembling the structure of eukaryotic proteasomes.

It is found in the cytoplasm. The enzyme catalyses Hydrolysis of proteins to small peptides in the presence of ATP and magnesium. alpha-casein is the usual test substrate. In the absence of ATP, only oligopeptides shorter than five residues are hydrolyzed (such as succinyl-Leu-Tyr-|-NHMec, and Leu-Tyr-Leu-|-Tyr-Trp, in which cleavage of the -Tyr-|-Leu- and -Tyr-|-Trp bonds also occurs).. Functionally, cleaves peptides in various proteins in a process that requires ATP hydrolysis. Has a chymotrypsin-like activity. Plays a major role in the degradation of misfolded proteins. This is ATP-dependent Clp protease proteolytic subunit from Actinobacillus succinogenes (strain ATCC 55618 / DSM 22257 / CCUG 43843 / 130Z).